Here is an 854-residue protein sequence, read N- to C-terminus: Iron and copper transporter IacT (854 aa).

The short motif at 187–194 is the TonB box element; sequence IELIVTAQ. The TBDR plug domain maps to 199 to 315; that stretch reads DAQDVPLSLT…PAGVVNVISR (117 aa). One can recognise a TBDR beta-barrel domain in the interval 320-854; it reads QPEMRISALY…TYGVRVSASF (535 aa). The TonB C-terminal box motif lies at 839–854; that stretch reads GFGDPVTYGVRVSASF.

This sequence belongs to the TonB-dependent receptor family.

It localises to the cell outer membrane. Functionally, involved in the TonB-dependent uptake of copper and iron under conditions in which the concentration of copper exceeds that of the iron. This Nostoc sp. (strain PCC 7120 / SAG 25.82 / UTEX 2576) protein is Iron and copper transporter IacT.